The chain runs to 427 residues: Peptidase B (427 aa).

Mn(2+) contacts are provided by K195 and D200. K207 is an active-site residue. Mn(2+) contacts are provided by D218, D277, and E279. R281 is a catalytic residue.

The protein belongs to the peptidase M17 family. As to quaternary structure, homohexamer. Mn(2+) serves as cofactor.

The protein localises to the cytoplasm. It catalyses the reaction Release of an N-terminal amino acid, Xaa, from a peptide or arylamide. Xaa is preferably Glu or Asp but may be other amino acids, including Leu, Met, His, Cys and Gln.. In terms of biological role, probably plays an important role in intracellular peptide degradation. The polypeptide is Peptidase B (Escherichia fergusonii (strain ATCC 35469 / DSM 13698 / CCUG 18766 / IAM 14443 / JCM 21226 / LMG 7866 / NBRC 102419 / NCTC 12128 / CDC 0568-73)).